The chain runs to 172 residues: MANGTNASAPYYSYEYYLDYLDLIPVDEKKLKAHKHSIVIAFWVSLAAFVVLLFLILLYMSWSGSPQMRNSPKHHQTCPWSHGLNLHLCIQKCLPCHREPLATSQAQASSVEPGSRTGPDQPLRQESSSTLPLGVFQTHPTLLWELTLNGGPLVRSKPSEPPPGDRTSQLQS.

The chain crosses the membrane as a helical span at residues I38–L58. Disordered stretches follow at residues Q105 to T130 and P152 to S172.

This sequence belongs to the MRAP family. As to quaternary structure, homodimer and heterodimer. Forms antiparallel homodimers and heterodimers with MRAP2. Interacts with MC1R, MC2R, MC3R, MC4R and MC5R.

It localises to the cell membrane. The protein resides in the endoplasmic reticulum membrane. Functionally, modulator of melanocortin receptors (MC1R, MC2R, MC3R, MC4R and MC5R). Acts by increasing ligand-sensitivity of melanocortin receptors and enhancing generation of cAMP by the receptors. Required both for MC2R trafficking to the cell surface of adrenal cells and for signaling in response to corticotropin (ACTH). May be involved in the intracellular trafficking pathways in adipocyte cells. The sequence is that of Melanocortin-2 receptor accessory protein (MRAP) from Pan troglodytes (Chimpanzee).